A 321-amino-acid polypeptide reads, in one-letter code: MHKYQTHWVESSEIKILSDKGKKHIALVAGGMSAEREVSLISAEGVGKALIEAGYKVTFIDMGADIAVKLHEIKPDIVFNCLHGTYGEDGCLPGLLNIMRIPYTHSGVLASSLAFDKVHSRSWFLTNNINMAESIVISKGDNIKTDPIKRPYVIKPFTQGSSIGVEVIFEEDDFNFANYDFPYGDEVIIEKYIKGRELQVAILNGKALGALEIKLLKNRFYDYETKYTEGFAEHLCPAPLPTDIYDKLLKESEKIYNTMNCKGAARAEFILEDGTNKLYALEINTHPGMTPLSIVPEIAAYHGIDFVNLIEEILKTASFES.

Positions 121–315 (RSWFLTNNIN…FVNLIEEILK (195 aa)) constitute an ATP-grasp domain. 148–199 (IKRPYVIKPFTQGSSIGVEVIFEEDDFNFANYDFPYGDEVIIEKYIKGRELQ) is a binding site for ATP. Positions 268, 282, and 284 each coordinate Mg(2+).

This sequence belongs to the D-alanine--D-alanine ligase family. Mg(2+) serves as cofactor. Requires Mn(2+) as cofactor.

It is found in the cytoplasm. The catalysed reaction is 2 D-alanine + ATP = D-alanyl-D-alanine + ADP + phosphate + H(+). It participates in cell wall biogenesis; peptidoglycan biosynthesis. Cell wall formation. The chain is D-alanine--D-alanine ligase from Rickettsia bellii (strain OSU 85-389).